A 443-amino-acid polypeptide reads, in one-letter code: Deoxyguanosinetriphosphate triphosphohydrolase-like protein (443 aa).

The HD domain maps to 66–259; sequence RLTHSLEAAQ…MELADDIAYG (194 aa).

The protein belongs to the dGTPase family. Type 2 subfamily.

The protein is Deoxyguanosinetriphosphate triphosphohydrolase-like protein of Vibrio vulnificus (strain CMCP6).